The primary structure comprises 250 residues: Cobalt transport protein CbiM (250 aa).

A signal peptide spans 1–24 (MKYWGTALLGAFCVFFFTPNTAYA). Transmembrane regions (helical) follow at residues 32–52 (LPAG…FWGI), 67–87 (MLLG…IPSV), 99–119 (LGAI…VLLF), 122–142 (LLLA…MGVM), 161–181 (VAVF…TSLQ), and 203–223 (IFAI…VFVF).

It belongs to the CbiM family. In terms of assembly, forms an energy-coupling factor (ECF) transporter complex composed of an ATP-binding protein (A component, CbiO), a transmembrane protein (T component, CbiQ) and 2 possible substrate-capture proteins (S components, CbiM and CbiN) of unknown stoichimetry.

It is found in the cell membrane. The protein operates within cofactor biosynthesis; adenosylcobalamin biosynthesis. Functionally, part of the energy-coupling factor (ECF) transporter complex CbiMNOQ involved in cobalt import. The chain is Cobalt transport protein CbiM from Desulforamulus reducens (strain ATCC BAA-1160 / DSM 100696 / MI-1) (Desulfotomaculum reducens).